The sequence spans 342 residues: Cyclin-D3-1 (342 aa).

Polar residues predominate over residues 322-334 (VGSPATNYESSAS). The interval 322-342 (VGSPATNYESSASSKRRRICR) is disordered.

Belongs to the cyclin family. Cyclin D subfamily.

The protein is Cyclin-D3-1 (CYCD3-1) of Oryza sativa subsp. japonica (Rice).